A 428-amino-acid polypeptide reads, in one-letter code: Succinyl-CoA--L-malate CoA-transferase alpha subunit (428 aa).

The segment at 1–31 (MPPTGEEPSGHAESKPPASDPMSTPGTGQEQ) is disordered. Over residues 21–31 (PMSTPGTGQEQ) the composition is skewed to polar residues. The active-site Nucleophile is the Asp-200.

Belongs to the CoA-transferase III family. As to quaternary structure, forms a large complex composed of six heterodimers (alpha, beta).

It catalyses the reaction succinyl-CoA + (S)-malate = (S)-malyl-CoA + succinate. It carries out the reaction (3S)-citramalate + succinyl-CoA = (3S)-citramalyl-CoA + succinate. Involved in the 3-hydroxypropionate cycle used for autotrophic carbon dioxide fixation. Catalyzes the transfer of CoA moiety from succinyl-CoA to L-malate to yield L-malyl-CoA. It is highly specific for succinyl-CoA as the CoA donor, however it can accept L-citramalate instead of L-malate as the CoA acceptor. This Chloroflexus aurantiacus protein is Succinyl-CoA--L-malate CoA-transferase alpha subunit (smtA).